The sequence spans 557 residues: Enhancer of polycomb-like protein 1 (557 aa).

Disordered regions lie at residues 323-349 and 424-449; these read VKPA…RPQP and QSHN…TYST. Over residues 327–337 the composition is skewed to pro residues; that stretch reads APVPTPAPPVK. A compositionally biased stretch (low complexity) spans 429-441; that stretch reads LSIPSSTPSTPLS.

Belongs to the enhancer of polycomb family. As to quaternary structure, component of the NuA4 histone acetyltransferase complex.

The protein localises to the nucleus. Component of the NuA4 histone acetyltransferase complex which is involved in transcriptional activation of selected genes principally by acetylation of nucleosomal histone H4 and H2A. The NuA4 complex is also involved in DNA repair. Involved in gene silencing by neighboring heterochromatin, blockage of the silencing spreading along the chromosome, and required for cell cycle progression through G2/M. The chain is Enhancer of polycomb-like protein 1 (epl1) from Schizosaccharomyces pombe (strain 972 / ATCC 24843) (Fission yeast).